The following is a 427-amino-acid chain: Histidine--tRNA ligase (427 aa).

Belongs to the class-II aminoacyl-tRNA synthetase family. In terms of assembly, homodimer.

The protein resides in the cytoplasm. The catalysed reaction is tRNA(His) + L-histidine + ATP = L-histidyl-tRNA(His) + AMP + diphosphate + H(+). In Deinococcus radiodurans (strain ATCC 13939 / DSM 20539 / JCM 16871 / CCUG 27074 / LMG 4051 / NBRC 15346 / NCIMB 9279 / VKM B-1422 / R1), this protein is Histidine--tRNA ligase.